Consider the following 233-residue polypeptide: Transcriptional regulatory protein WalR (233 aa).

A Response regulatory domain is found at 4 to 117 (KVVVVDDEKP…ELIARVKANL (114 aa)). Asp-53 is modified (4-aspartylphosphate). Positions 132–231 (SNEITIKDIV…RRGVGYFLQQ (100 aa)) form a DNA-binding region, ompR/PhoB-type.

Post-translationally, phosphorylated by WalK.

It is found in the cytoplasm. Member of the two-component regulatory system WalK/WalR. This Staphylococcus saprophyticus subsp. saprophyticus (strain ATCC 15305 / DSM 20229 / NCIMB 8711 / NCTC 7292 / S-41) protein is Transcriptional regulatory protein WalR (walR).